The sequence spans 361 residues: MGGAVSAGEDNDELIDNLKEAQYIRTELVEQAFRAIDRADYYLEEFKENAYKDLAWKHGNIHLSAPCIYSEVMEALDLQPGLSFLNLGSGTGYLSSMVGLILGPFGVNHGVELHSDVIEYAKQKLDFFIRTSDSFDKFDFCEPSFVTGNCLEISPDCSQYDRVYCGAGVQKEHEEYMKNLLKVGGILVMPLEEKLTKITRTGPSAWETKKILAVSFAPLIQPCHSESGKSRLVQLPPVAVRSLQDLARIAIRGTIKKIIHQETVSKNGNGLKNTPRFKRRRVRRRRMETIVFLDKEVFASRISNPSDDNSCEDLEEERREEEEKTPPETKPDPPVNFLRQKVLSLPLPDPLKYYLLYYREK.

Residue G2 is the site of N-myristoyl glycine attachment. S64 is a catalytic residue. AdoMet binding motif regions lie at residues 85-94 (LNLGSGTGYL), 160-164 (YDRVY), and 181-191 (LKVGGILVMPL). The BC-box stretch occupies residues 240 to 250 (VRSLQDLARIA). Residues 303-336 (SNPSDDNSCEDLEEERREEEEKTPPETKPDPPVN) form a disordered region. The segment covering 309–320 (NSCEDLEEERRE) has biased composition (acidic residues). Over residues 321 to 331 (EEEKTPPETKP) the composition is skewed to basic and acidic residues. The segment at 345-348 (LPLP) is CUL-box.

It belongs to the methyltransferase superfamily. L-isoaspartyl/D-aspartyl protein methyltransferase family.

The protein localises to the cytoplasm. May act as a substrate recognition component of an ECS (Elongin BC-CUL5-SOCS-box protein) E3 ubiquitin ligase complex which mediates the ubiquitination and subsequent proteasomal degradation of target proteins. May bind to the methyltransferase cofactor S-adenosylmethionine (AdoMet) via the N-terminal AdoMet binding motif, but probably does not display methyltransferase activity. This chain is Protein-L-isoaspartate O-methyltransferase domain-containing protein 2 (PCMTD2), found in Homo sapiens (Human).